Here is a 277-residue protein sequence, read N- to C-terminus: Large ribosomal subunit protein uL2 (277 aa).

The disordered stretch occupies residues 223 to 261 (SVMNPNDHPHGGGEGKSPVGRPSPVTPWGKPALGYKTRK).

This sequence belongs to the universal ribosomal protein uL2 family. In terms of assembly, part of the 50S ribosomal subunit. Forms a bridge to the 30S subunit in the 70S ribosome.

Its function is as follows. One of the primary rRNA binding proteins. Required for association of the 30S and 50S subunits to form the 70S ribosome, for tRNA binding and peptide bond formation. It has been suggested to have peptidyltransferase activity; this is somewhat controversial. Makes several contacts with the 16S rRNA in the 70S ribosome. This chain is Large ribosomal subunit protein uL2, found in Clostridium botulinum (strain Alaska E43 / Type E3).